The chain runs to 1314 residues: Synergin gamma (1314 aa).

Residues Met-115–Ser-155 are a coiled coil. The disordered stretch occupies residues Gly-178 to Ser-199. The 94-residue stretch at Asn-295–Leu-388 folds into the EH domain. The short motif at Asp-457 to Phe-461 is the DFXDF motif 1 element. The tract at residues Asp-460–Leu-498 is disordered. Over residues Gln-462–Pro-496 the composition is skewed to polar residues. Residue Ser-473 is modified to Phosphoserine. N6-acetyllysine is present on Lys-513. The tract at residues Lys-518 to Ser-786 is interaction with AP1G1. A Phosphoserine modification is found at Ser-580. The interval Leu-666–Glu-678 is interaction with AP1G1, AP1G2 and GGA1. Residues Asp-690–Phe-694 carry the DFXDF motif 2 motif. Ser-720 is modified (phosphoserine). An N6-acetyllysine modification is found at Lys-744. A phosphoserine mark is found at Ser-752 and Ser-772. The DFXDF motif 3 motif lies at Asp-775 to Phe-779. Ser-812, Ser-852, Ser-855, Ser-909, Ser-919, and Ser-935 each carry phosphoserine. Disordered regions lie at residues Pro-972 to Glu-1026 and Ser-1073 to Asn-1102. Basic and acidic residues predominate over residues Glu-976 to Lys-990. The segment covering Glu-1001 to Glu-1019 has biased composition (polar residues). A phosphoserine mark is found at Ser-1006, Ser-1073, Ser-1075, Ser-1087, and Ser-1098. Position 1100 is a phosphothreonine (Thr-1100).

Self-associates. Interacts with GGA1 (via GAE domain). Interacts with GGA2 and GGA3. Interacts with AP1G1 (via GAE domain), a subunit of adapter protein complex AP-1. Interacts with AP1G2 (via GAE domain) a subunit of adapter protein complex AP-1. Component of the aftiphilin/p200/gamma-synergin complex, at least composed of AFTPH/aftiphilin, HEATR5B/p200a and SYNRG/gamma-synergin, which plays a role in the AP1G1/AP-1-mediated trafficking of transferrin from early to recycling endosomes. Within the complex interacts with AFTPH/aftiphilin and HEATR5B/p200a; the interactions are direct. Interacts (via EH domain) with SCAMP1.

Its subcellular location is the cytoplasm. The protein localises to the golgi apparatus. It is found in the trans-Golgi network membrane. It localises to the perinuclear region. The protein resides in the cytoplasmic vesicle. Its subcellular location is the clathrin-coated vesicle. Its function is as follows. Plays a role in endocytosis and/or membrane trafficking at the trans-Golgi network (TGN). May act by linking the adapter protein complex AP-1 to other proteins. Component of clathrin-coated vesicles. Component of the aftiphilin/p200/gamma-synergin complex, which plays roles in AP1G1/AP-1-mediated protein trafficking including the trafficking of transferrin from early to recycling endosomes, and the membrane trafficking of furin and the lysosomal enzyme cathepsin D between the trans-Golgi network (TGN) and endosomes. This chain is Synergin gamma, found in Homo sapiens (Human).